A 377-amino-acid polypeptide reads, in one-letter code: 6-oxocyclohex-1-ene-1-carbonyl-CoA hydrolase (377 aa).

Belongs to the enoyl-CoA hydratase/isomerase family. In terms of assembly, homotetramer.

The enzyme catalyses 6-oxocyclohex-1-ene-1-carbonyl-CoA + 2 H2O = 3-hydroxy-6-carboxyhexanoyl-CoA + H(+). It participates in aromatic compound metabolism; benzoyl-CoA degradation. Functionally, involved in the central benzoyl-CoA catabolism. Catalyzes the addition of one molecule of water to the double bond and the hydrolytic cleavage of C-C bond in the alicyclic ring, 6-oxocyclohex-1-ene-1-carbonyl-CoA (6-OCH-CoA) to yield 3-hydroxypimelyl-CoA. The chain is 6-oxocyclohex-1-ene-1-carbonyl-CoA hydrolase (oah) from Thauera aromatica.